The primary structure comprises 180 residues: Crossover junction endodeoxyribonuclease RuvC (180 aa).

Residues D7, E66, and D138 contribute to the active site. The Mg(2+) site is built by D7, E66, and D138.

Belongs to the RuvC family. Homodimer which binds Holliday junction (HJ) DNA. The HJ becomes 2-fold symmetrical on binding to RuvC with unstacked arms; it has a different conformation from HJ DNA in complex with RuvA. In the full resolvosome a probable DNA-RuvA(4)-RuvB(12)-RuvC(2) complex forms which resolves the HJ. Mg(2+) serves as cofactor.

The protein resides in the cytoplasm. It carries out the reaction Endonucleolytic cleavage at a junction such as a reciprocal single-stranded crossover between two homologous DNA duplexes (Holliday junction).. Its function is as follows. The RuvA-RuvB-RuvC complex processes Holliday junction (HJ) DNA during genetic recombination and DNA repair. Endonuclease that resolves HJ intermediates. Cleaves cruciform DNA by making single-stranded nicks across the HJ at symmetrical positions within the homologous arms, yielding a 5'-phosphate and a 3'-hydroxyl group; requires a central core of homology in the junction. The consensus cleavage sequence is 5'-(A/T)TT(C/G)-3'. Cleavage occurs on the 3'-side of the TT dinucleotide at the point of strand exchange. HJ branch migration catalyzed by RuvA-RuvB allows RuvC to scan DNA until it finds its consensus sequence, where it cleaves and resolves the cruciform DNA. The protein is Crossover junction endodeoxyribonuclease RuvC of Burkholderia multivorans (strain ATCC 17616 / 249).